Consider the following 360-residue polypeptide: Phospho-N-acetylmuramoyl-pentapeptide-transferase (360 aa).

The next 10 membrane-spanning stretches (helical) occupy residues 25–45 (RGILGVLTALSLALWLGPWMI), 73–93 (TMGGALILSAIAISTLLWADL), 97–117 (YVWVVLIVTLAFGAIGWVDDY), 134–154 (YFWQSVFGLAAAIFLYKTAPT), 168–188 (LAIPLGAGFIVLTYFVIVGSS), 199–219 (GLAIMPTVMVGGALGIFCYLS), 236–256 (AGELIVFCGALIGAGLGFLWF), 263–283 (VFMGDVGALALGAALGTIAVI), 288–308 (VVLFIMGGVFVMETLSVVIQV), and 338–358 (VIVRFWIITVILVLIGLATLK).

The protein belongs to the glycosyltransferase 4 family. MraY subfamily. Mg(2+) is required as a cofactor.

It is found in the cell inner membrane. The catalysed reaction is UDP-N-acetyl-alpha-D-muramoyl-L-alanyl-gamma-D-glutamyl-meso-2,6-diaminopimeloyl-D-alanyl-D-alanine + di-trans,octa-cis-undecaprenyl phosphate = di-trans,octa-cis-undecaprenyl diphospho-N-acetyl-alpha-D-muramoyl-L-alanyl-D-glutamyl-meso-2,6-diaminopimeloyl-D-alanyl-D-alanine + UMP. It participates in cell wall biogenesis; peptidoglycan biosynthesis. Its function is as follows. Catalyzes the initial step of the lipid cycle reactions in the biosynthesis of the cell wall peptidoglycan: transfers peptidoglycan precursor phospho-MurNAc-pentapeptide from UDP-MurNAc-pentapeptide onto the lipid carrier undecaprenyl phosphate, yielding undecaprenyl-pyrophosphoryl-MurNAc-pentapeptide, known as lipid I. The chain is Phospho-N-acetylmuramoyl-pentapeptide-transferase from Pseudomonas entomophila (strain L48).